The sequence spans 573 residues: Proline--tRNA ligase (573 aa).

It belongs to the class-II aminoacyl-tRNA synthetase family. ProS type 1 subfamily. Homodimer.

The protein localises to the cytoplasm. The enzyme catalyses tRNA(Pro) + L-proline + ATP = L-prolyl-tRNA(Pro) + AMP + diphosphate. Catalyzes the attachment of proline to tRNA(Pro) in a two-step reaction: proline is first activated by ATP to form Pro-AMP and then transferred to the acceptor end of tRNA(Pro). As ProRS can inadvertently accommodate and process non-cognate amino acids such as alanine and cysteine, to avoid such errors it has two additional distinct editing activities against alanine. One activity is designated as 'pretransfer' editing and involves the tRNA(Pro)-independent hydrolysis of activated Ala-AMP. The other activity is designated 'posttransfer' editing and involves deacylation of mischarged Ala-tRNA(Pro). The misacylated Cys-tRNA(Pro) is not edited by ProRS. The polypeptide is Proline--tRNA ligase (Methylobacillus flagellatus (strain ATCC 51484 / DSM 6875 / VKM B-1610 / KT)).